We begin with the raw amino-acid sequence, 847 residues long: Leucine--tRNA ligase (847 aa).

The short motif at 41-51 is the 'HIGH' region element; the sequence is PYPSGRIHMGH. The short motif at 619–623 is the 'KMSKS' region element; that stretch reads KMSKS. Residue K622 coordinates ATP.

It belongs to the class-I aminoacyl-tRNA synthetase family.

It localises to the cytoplasm. The catalysed reaction is tRNA(Leu) + L-leucine + ATP = L-leucyl-tRNA(Leu) + AMP + diphosphate. In Cereibacter sphaeroides (strain KD131 / KCTC 12085) (Rhodobacter sphaeroides), this protein is Leucine--tRNA ligase.